Consider the following 319-residue polypeptide: Cytochrome f (319 aa).

The N-terminal stretch at M1 to A35 is a signal peptide. Heme is bound by residues Y36, C56, C59, and H60. Residues V285–K305 form a helical membrane-spanning segment.

This sequence belongs to the cytochrome f family. The 4 large subunits of the cytochrome b6-f complex are cytochrome b6, subunit IV (17 kDa polypeptide, petD), cytochrome f and the Rieske protein, while the 4 small subunits are PetG, PetL, PetM and PetN. The complex functions as a dimer. It depends on heme as a cofactor.

The protein resides in the plastid. Its subcellular location is the chloroplast thylakoid membrane. Functionally, component of the cytochrome b6-f complex, which mediates electron transfer between photosystem II (PSII) and photosystem I (PSI), cyclic electron flow around PSI, and state transitions. This Physcomitrium patens (Spreading-leaved earth moss) protein is Cytochrome f.